A 197-amino-acid polypeptide reads, in one-letter code: Nucleoside triphosphate pyrophosphatase (197 aa).

Asp75 (proton acceptor) is an active-site residue.

It belongs to the Maf family. The cofactor is a divalent metal cation.

It localises to the cytoplasm. It carries out the reaction a ribonucleoside 5'-triphosphate + H2O = a ribonucleoside 5'-phosphate + diphosphate + H(+). The catalysed reaction is a 2'-deoxyribonucleoside 5'-triphosphate + H2O = a 2'-deoxyribonucleoside 5'-phosphate + diphosphate + H(+). Its function is as follows. Nucleoside triphosphate pyrophosphatase. May have a dual role in cell division arrest and in preventing the incorporation of modified nucleotides into cellular nucleic acids. This chain is Nucleoside triphosphate pyrophosphatase, found in Haemophilus ducreyi (strain 35000HP / ATCC 700724).